Here is a 421-residue protein sequence, read N- to C-terminus: Glycosaminoglycan xylosylkinase homolog (421 aa).

Residues Met-1 to Gly-21 form the signal peptide. N-linked (GlcNAc...) asparagine glycosylation occurs at Asn-83. ATP contacts are provided by Gln-131 and Lys-147. A Mn(2+)-binding site is contributed by Asp-166. Cystine bridges form between Cys-225-Cys-240 and Cys-230-Cys-233. Ile-252–Val-255 contributes to the ATP binding site. 2 disulfides stabilise this stretch: Cys-285–Cys-351 and Cys-352–Cys-409. Residue Asp-314 is part of the active site. ATP contacts are provided by Glu-319 and Asp-329. Asp-329 lines the Mn(2+) pocket.

This sequence belongs to the FAM20 family. Mn(2+) serves as cofactor.

Its subcellular location is the golgi apparatus. The protein localises to the endoplasmic reticulum. It carries out the reaction 3-O-(beta-D-galactosyl-(1-&gt;3)-beta-D-galactosyl-(1-&gt;4)-beta-D-xylosyl)-L-seryl-[protein] + ATP = 3-O-(beta-D-galactosyl-(1-&gt;3)-beta-D-galactosyl-(1-&gt;4)-beta-D-2-O-phosphoxylosyl)-L-seryl-[protein] + ADP + H(+). In terms of biological role, kylose kinase that mediates the 2-O-phosphorylation of xylose in the glycosaminoglycan-protein linkage region of proteoglycans. The polypeptide is Glycosaminoglycan xylosylkinase homolog (Drosophila melanogaster (Fruit fly)).